The chain runs to 233 residues: Purine nucleoside phosphorylase DeoD-type (233 aa).

Residue His-4 participates in a purine D-ribonucleoside binding. Residues Gly-20, Arg-24, Arg-43, and 87–90 each bind phosphate; that span reads RVGT. A purine D-ribonucleoside contacts are provided by residues 178-180 and 202-203; these read EME and SD. Asp-203 acts as the Proton donor in catalysis.

Belongs to the PNP/UDP phosphorylase family. In terms of assembly, homohexamer; trimer of homodimers.

It carries out the reaction a purine D-ribonucleoside + phosphate = a purine nucleobase + alpha-D-ribose 1-phosphate. It catalyses the reaction a purine 2'-deoxy-D-ribonucleoside + phosphate = a purine nucleobase + 2-deoxy-alpha-D-ribose 1-phosphate. Catalyzes the reversible phosphorolytic breakdown of the N-glycosidic bond in the beta-(deoxy)ribonucleoside molecules, with the formation of the corresponding free purine bases and pentose-1-phosphate. The sequence is that of Purine nucleoside phosphorylase DeoD-type from Listeria monocytogenes serotype 4b (strain CLIP80459).